A 449-amino-acid chain; its full sequence is C4-dicarboxylate transport protein (449 aa).

A run of 8 helical transmembrane segments spans residues 18 to 38 (PFYLQLYFWVIIAIILGALLG), 61 to 81 (MIISPVIFLTIVTGIASVAHV), 93 to 113 (VYFLFFSTLALLLGLVVAHVV), 159 to 179 (FVGDNILQVLFVAVLFGIALA), 202 to 222 (LVQMLMKMAPIGAFGAIAFTI), 244 to 264 (SLLFVLVILGAVSWLCGFSIL), 311 to 331 (GYSFNLDGTNIYMTLAALFIA), and 369 to 389 (AATLAVVPEVPIAGMALILGV).

Belongs to the dicarboxylate/amino acid:cation symporter (DAACS) (TC 2.A.23) family.

The protein localises to the cell inner membrane. Functionally, responsible for the transport of dicarboxylates such as succinate, fumarate, and malate from the periplasm across the membrane. This Xylella fastidiosa (strain M12) protein is C4-dicarboxylate transport protein.